Consider the following 252-residue polypeptide: Imidazole glycerol phosphate synthase subunit HisF (252 aa).

Catalysis depends on residues D11 and D130.

It belongs to the HisA/HisF family. As to quaternary structure, heterodimer of HisH and HisF.

It localises to the cytoplasm. It catalyses the reaction 5-[(5-phospho-1-deoxy-D-ribulos-1-ylimino)methylamino]-1-(5-phospho-beta-D-ribosyl)imidazole-4-carboxamide + L-glutamine = D-erythro-1-(imidazol-4-yl)glycerol 3-phosphate + 5-amino-1-(5-phospho-beta-D-ribosyl)imidazole-4-carboxamide + L-glutamate + H(+). It functions in the pathway amino-acid biosynthesis; L-histidine biosynthesis; L-histidine from 5-phospho-alpha-D-ribose 1-diphosphate: step 5/9. Functionally, IGPS catalyzes the conversion of PRFAR and glutamine to IGP, AICAR and glutamate. The HisF subunit catalyzes the cyclization activity that produces IGP and AICAR from PRFAR using the ammonia provided by the HisH subunit. This is Imidazole glycerol phosphate synthase subunit HisF from Bacillus cytotoxicus (strain DSM 22905 / CIP 110041 / 391-98 / NVH 391-98).